A 261-amino-acid chain; its full sequence is Cytochrome c oxidase subunit 3 (261 aa).

Over 1–15 (MTHQTHAYHMVNPSP) the chain is Mitochondrial matrix. Residues 16–33 (WPLTGAFSALLLTSGLVM) traverse the membrane as a helical segment. Residues 34-38 (WFHYN) lie on the Mitochondrial intermembrane side of the membrane. Residues 39-62 (SITLLTLGLLTNILTMYQWWRDVI) traverse the membrane as a helical segment. Residues 63-77 (REGTYQGHHTPIVQK) are Mitochondrial matrix-facing. A helical transmembrane segment spans residues 78-99 (GLRYGMILFIVSEVFFFAGFFW). The Mitochondrial intermembrane portion of the chain corresponds to 100–129 (AFYHSSLVPTHDLGGCWPPTGISPLNPLEV). A helical membrane pass occupies residues 130-150 (PLLNTSVLLASGVSITWAHHS). Residues 151 to 156 (LMEGKR) are Mitochondrial matrix-facing. The chain crosses the membrane as a helical span at residues 157-178 (NHMNQALLITIMLGLYFTILQA). Over 179-198 (SEYFETSFSISDGIYGSTFF) the chain is Mitochondrial intermembrane. The helical transmembrane segment at 199-224 (MATGFHGLHVIIGSTFLIVCLLRQLK) threads the bilayer. Over 225–232 (FHFTSKHH) the chain is Mitochondrial matrix. A helical transmembrane segment spans residues 233-255 (FGFEAAAWYWHFVDVVWLFLYVS). Over 256 to 261 (IYWWGS) the chain is Mitochondrial intermembrane.

Belongs to the cytochrome c oxidase subunit 3 family. As to quaternary structure, component of the cytochrome c oxidase (complex IV, CIV), a multisubunit enzyme composed of 14 subunits. The complex is composed of a catalytic core of 3 subunits MT-CO1, MT-CO2 and MT-CO3, encoded in the mitochondrial DNA, and 11 supernumerary subunits COX4I, COX5A, COX5B, COX6A, COX6B, COX6C, COX7A, COX7B, COX7C, COX8 and NDUFA4, which are encoded in the nuclear genome. The complex exists as a monomer or a dimer and forms supercomplexes (SCs) in the inner mitochondrial membrane with NADH-ubiquinone oxidoreductase (complex I, CI) and ubiquinol-cytochrome c oxidoreductase (cytochrome b-c1 complex, complex III, CIII), resulting in different assemblies (supercomplex SCI(1)III(2)IV(1) and megacomplex MCI(2)III(2)IV(2)).

It localises to the mitochondrion inner membrane. The enzyme catalyses 4 Fe(II)-[cytochrome c] + O2 + 8 H(+)(in) = 4 Fe(III)-[cytochrome c] + 2 H2O + 4 H(+)(out). In terms of biological role, component of the cytochrome c oxidase, the last enzyme in the mitochondrial electron transport chain which drives oxidative phosphorylation. The respiratory chain contains 3 multisubunit complexes succinate dehydrogenase (complex II, CII), ubiquinol-cytochrome c oxidoreductase (cytochrome b-c1 complex, complex III, CIII) and cytochrome c oxidase (complex IV, CIV), that cooperate to transfer electrons derived from NADH and succinate to molecular oxygen, creating an electrochemical gradient over the inner membrane that drives transmembrane transport and the ATP synthase. Cytochrome c oxidase is the component of the respiratory chain that catalyzes the reduction of oxygen to water. Electrons originating from reduced cytochrome c in the intermembrane space (IMS) are transferred via the dinuclear copper A center (CU(A)) of subunit 2 and heme A of subunit 1 to the active site in subunit 1, a binuclear center (BNC) formed by heme A3 and copper B (CU(B)). The BNC reduces molecular oxygen to 2 water molecules using 4 electrons from cytochrome c in the IMS and 4 protons from the mitochondrial matrix. This Mus musculus (Mouse) protein is Cytochrome c oxidase subunit 3 (mt-Co3).